Reading from the N-terminus, the 373-residue chain is ATP phosphoribosyltransferase regulatory subunit (373 aa).

This sequence belongs to the class-II aminoacyl-tRNA synthetase family. HisZ subfamily. In terms of assembly, heteromultimer composed of HisG and HisZ subunits.

Its subcellular location is the cytoplasm. The protein operates within amino-acid biosynthesis; L-histidine biosynthesis; L-histidine from 5-phospho-alpha-D-ribose 1-diphosphate: step 1/9. Its function is as follows. Required for the first step of histidine biosynthesis. May allow the feedback regulation of ATP phosphoribosyltransferase activity by histidine. In Rhizobium leguminosarum bv. trifolii (strain WSM2304), this protein is ATP phosphoribosyltransferase regulatory subunit.